We begin with the raw amino-acid sequence, 358 residues long: U5 small nuclear ribonucleoprotein 40 kDa protein (358 aa).

Residue lysine 18 forms a Glycyl lysine isopeptide (Lys-Gly) (interchain with G-Cter in SUMO2) linkage. At arginine 21 the chain carries Asymmetric dimethylarginine. WD repeat units lie at residues 65 to 104 (GHEG…DNYA), 108 to 147 (GHSG…RVKR), 150 to 190 (GHTS…AIQT), 192 to 231 (QNTY…LTYT), 234 to 273 (GHAD…PKER), 284 to 323 (NFEK…ILYK), and 326 to 358 (GHAG…GEIQ). Lysine 271 participates in a covalent cross-link: Glycyl lysine isopeptide (Lys-Gly) (interchain with G-Cter in SUMO2).

Component of the pre-catalytic and catalytic spliceosome complexes. Component of the postcatalytic spliceosome P complex. Part of the U5 snRNP complex. Interacts with PRPF8. Component of the U4/U6-U5 tri-snRNP complex composed of the U4, U6 and U5 snRNAs and at least PRPF3, PRPF4, PRPF6, PRPF8, PRPF31, SNRNP200, TXNL4A, WDR57, SNRNP40, DDX23, CD2BP2, PPIH, SNU13, EFTUD2, SART1 and USP39. Component of the minor spliceosome, which splices U12-type introns.

It is found in the nucleus. Functionally, required for pre-mRNA splicing as component of the activated spliceosome. Component of the U5 small nuclear ribonucleoprotein (snRNP) complex and the U4/U6-U5 tri-snRNP complex, building blocks of the spliceosome. As a component of the minor spliceosome, involved in the splicing of U12-type introns in pre-mRNAs. The sequence is that of U5 small nuclear ribonucleoprotein 40 kDa protein (SNRNP40) from Bos taurus (Bovine).